The primary structure comprises 103 residues: Putative defensin-like protein 305 (103 aa).

The signal sequence occupies residues 1–31 (MREEILEIFLLVNFVFILCTSIMVRIRYVSC). 3 cysteine pairs are disulfide-bonded: cysteine 31–cysteine 51, cysteine 37–cysteine 56, and cysteine 42–cysteine 58.

Belongs to the DEFL family.

It localises to the secreted. This is Putative defensin-like protein 305 from Arabidopsis thaliana (Mouse-ear cress).